We begin with the raw amino-acid sequence, 341 residues long: L-threonine 3-dehydrogenase (341 aa).

Cys-38 lines the Zn(2+) pocket. Catalysis depends on charge relay system residues Thr-40 and His-43. The Zn(2+) site is built by His-63, Glu-64, Cys-93, Cys-96, Cys-99, and Cys-107. NAD(+) contacts are provided by residues Ile-175, Asp-195, Arg-200, 262–264, and 286–287; these read LGI and IY.

It belongs to the zinc-containing alcohol dehydrogenase family. Homotetramer. Zn(2+) is required as a cofactor.

It localises to the cytoplasm. The catalysed reaction is L-threonine + NAD(+) = (2S)-2-amino-3-oxobutanoate + NADH + H(+). The protein operates within amino-acid degradation; L-threonine degradation via oxydo-reductase pathway; glycine from L-threonine: step 1/2. Functionally, catalyzes the NAD(+)-dependent oxidation of L-threonine to 2-amino-3-ketobutyrate. This is L-threonine 3-dehydrogenase from Shewanella sp. (strain MR-7).